Here is a 414-residue protein sequence, read N- to C-terminus: Solute carrier family 25 member 46-B (414 aa).

Residues 1–13 (MQPRRPDRFDGLE) show a composition bias toward basic and acidic residues. Residues 1 to 89 (MQPRRPDRFD…AFGEENSGSS (89 aa)) form a disordered region. The segment covering 29-50 (YQSSFPARSLSSSGDLSQQWVT) has biased composition (polar residues). Residues 92–183 (QVNRFAGFGI…GMLSEFTHLP (92 aa)) form a Solcar 1 repeat. The next 6 helical transmembrane spans lie at 99 to 119 (FGIG…CIVL), 159 to 179 (MGST…LSEF), 198 to 218 (HLLL…ASLI), 254 to 274 (LLPL…HYII), 310 to 330 (FPEL…LYPL), and 379 to 399 (LGFY…AIVL). The stretch at 307 to 412 (EDYFPELLAN…KIIYSSVVQT (106 aa)) is one Solcar 2 repeat.

This sequence belongs to the mitochondrial carrier (TC 2.A.29) family.

The protein resides in the mitochondrion outer membrane. May play a role in mitochondrial dynamics by controlling mitochondrial membrane fission. The sequence is that of Solute carrier family 25 member 46-B (slc25a46-b) from Xenopus laevis (African clawed frog).